The chain runs to 373 residues: Dynein regulatory complex protein 9 (373 aa).

Residues 145–200 (EQAMKETIEREKNTTAAVRQLRNDLREEKLDHEEKMKEKKKGLSTLKEQLKALKMD) are a coiled coil. In terms of domain architecture, IQ spans 336–365 (RAQAAVIIQAWWRGHKVRMVMSGGGKKGAK).

Belongs to the DRC9 family. Component of the nexin-dynein regulatory complex (N-DRC).

Its subcellular location is the cytoplasm. It is found in the cytoskeleton. It localises to the flagellum axoneme. Functionally, component of the nexin-dynein regulatory complex (N-DRC), a key regulator of ciliary/flagellar motility which maintains the alignment and integrity of the distal axoneme and regulates microtubule sliding in motile axonemes. The sequence is that of Dynein regulatory complex protein 9 from Chlamydomonas reinhardtii (Chlamydomonas smithii).